The sequence spans 109 residues: Nucleoid-associated protein ECA1177 (109 aa).

It belongs to the YbaB/EbfC family. As to quaternary structure, homodimer.

The protein resides in the cytoplasm. It is found in the nucleoid. Its function is as follows. Binds to DNA and alters its conformation. May be involved in regulation of gene expression, nucleoid organization and DNA protection. This chain is Nucleoid-associated protein ECA1177, found in Pectobacterium atrosepticum (strain SCRI 1043 / ATCC BAA-672) (Erwinia carotovora subsp. atroseptica).